We begin with the raw amino-acid sequence, 226 residues long: V-type proton ATPase subunit E 2 (226 aa).

The protein belongs to the V-ATPase E subunit family. V-ATPase is a heteromultimeric enzyme made up of two complexes: the ATP-hydrolytic V1 complex and the proton translocation V0 complex. The V1 complex consists of three catalytic AB heterodimers that form a heterohexamer, three peripheral stalks each consisting of EG heterodimers, one central rotor including subunits D and F, and the regulatory subunits C and H. The proton translocation complex V0 consists of the proton transport subunit a, a ring of proteolipid subunits c9c'', rotary subunit d, subunits e and f, and the accessory subunits ATP6AP1/Ac45 and ATP6AP2/PRR. Testis specific.

Subunit of the V1 complex of vacuolar(H+)-ATPase (V-ATPase), a multisubunit enzyme composed of a peripheral complex (V1) that hydrolyzes ATP and a membrane integral complex (V0) that translocates protons. V-ATPase is responsible for acidifying and maintaining the pH of intracellular compartments and in some cell types, is targeted to the plasma membrane, where it is responsible for acidifying the extracellular environment. This Mus musculus (Mouse) protein is V-type proton ATPase subunit E 2 (Atp6v1e2).